Reading from the N-terminus, the 168-residue chain is Fusaric acid resistance protein FusE (168 aa).

In terms of biological role, involved in the resistance (detoxification) of the fungal toxin fusaric acid. The sequence is that of Fusaric acid resistance protein FusE (fusE) from Burkholderia cepacia (Pseudomonas cepacia).